A 475-amino-acid chain; its full sequence is Histidine--tRNA ligase (475 aa).

This sequence belongs to the class-II aminoacyl-tRNA synthetase family. As to quaternary structure, homodimer.

The protein resides in the cytoplasm. The catalysed reaction is tRNA(His) + L-histidine + ATP = L-histidyl-tRNA(His) + AMP + diphosphate + H(+). This chain is Histidine--tRNA ligase, found in Flavobacterium johnsoniae (strain ATCC 17061 / DSM 2064 / JCM 8514 / BCRC 14874 / CCUG 350202 / NBRC 14942 / NCIMB 11054 / UW101) (Cytophaga johnsonae).